We begin with the raw amino-acid sequence, 730 residues long: Catalase-peroxidase (730 aa).

Basic and acidic residues predominate over residues 1 to 11; sequence MDAKTDDKDAG. The N-terminal stretch at 1-21 is a signal peptide; sequence MDAKTDDKDAGKCPFSSGSHA. The disordered stretch occupies residues 1-24; that stretch reads MDAKTDDKDAGKCPFSSGSHAHRN. The tryptophyl-tyrosyl-methioninium (Trp-Tyr) (with M-244) cross-link spans 96-218; the sequence is WHSAGTYRIS…LGAVQMGLIY (123 aa). His97 acts as the Proton acceptor in catalysis. Positions 218–244 form a cross-link, tryptophyl-tyrosyl-methioninium (Tyr-Met) (with W-96); sequence YVNPEGPNGNPDPVGSAKDIRETFYRM. Residue His259 coordinates heme b.

Belongs to the peroxidase family. Peroxidase/catalase subfamily. Homodimer or homotetramer. Heme b is required as a cofactor. In terms of processing, formation of the three residue Trp-Tyr-Met cross-link is important for the catalase, but not the peroxidase activity of the enzyme.

The catalysed reaction is H2O2 + AH2 = A + 2 H2O. It carries out the reaction 2 H2O2 = O2 + 2 H2O. Its function is as follows. Bifunctional enzyme with both catalase and broad-spectrum peroxidase activity. The sequence is that of Catalase-peroxidase from Rhodopseudomonas palustris (strain BisA53).